A 308-amino-acid chain; its full sequence is Putative T-box protein 30/42 (308 aa).

The segment at residues 11–192 is a DNA-binding region (T-box); it reads MSNEELWKER…KHSTFGNRSE (182 aa). The disordered stretch occupies residues 186–220; the sequence is TFGNRSEGGIKRKTSDAAGQLPSKRSSKKPVKKDV.

It localises to the nucleus. Its function is as follows. Involved in the regulatory network to control embryonic patterning and morphogenesis. Implicated in negatively regulating vab-7 expression at the anterior of embryos. In Caenorhabditis elegans, this protein is Putative T-box protein 30/42 (tbx-30).